Reading from the N-terminus, the 167-residue chain is N-alpha-acetyltransferase (167 aa).

The 156-residue stretch at tyrosine 12–leucine 167 folds into the N-acetyltransferase domain. Tyrosine 37 lines the substrate pocket. Position 88 (histidine 88) interacts with Zn(2+). Residues isoleucine 92 to valine 94 and arginine 100 to threonine 105 each bind acetyl-CoA. Zn(2+) is bound at residue glutamate 127. Residues asparagine 132 and tyrosine 139–lysine 141 contribute to the acetyl-CoA site. Tyrosine 154 is a substrate binding site.

The protein belongs to the acetyltransferase family. ARD1 subfamily. As to quaternary structure, homodimer.

It is found in the cytoplasm. It carries out the reaction N-terminal L-alanyl-[protein] + acetyl-CoA = N-terminal N(alpha)-acetyl-L-alanyl-[protein] + CoA + H(+). The enzyme catalyses N-terminal L-seryl-[protein] + acetyl-CoA = N-terminal N(alpha)-acetyl-L-seryl-[protein] + CoA + H(+). The catalysed reaction is N-terminal L-methionyl-L-leucyl-[protein] + acetyl-CoA = N-terminal N(alpha)-acetyl-L-methionyl-L-leucyl-[protein] + CoA + H(+). It catalyses the reaction N-terminal L-methionyl-L-glutamyl-[protein] + acetyl-CoA = N-terminal N(alpha)-acetyl-L-methionyl-L-glutamyl-[protein] + CoA + H(+). Displays alpha (N-terminal) acetyltransferase activity. Catalyzes the covalent attachment of an acetyl moiety from acetyl-CoA to the free alpha-amino group at the N-terminus of a protein. The protein is N-alpha-acetyltransferase of Sulfurisphaera tokodaii (strain DSM 16993 / JCM 10545 / NBRC 100140 / 7) (Sulfolobus tokodaii).